Reading from the N-terminus, the 267-residue chain is Thiamine thiazole synthase (267 aa).

NAD(+) contacts are provided by residues Ser41, 60-61 (ER), Gly68, Val132, and 160-162 (HVD). The Fe cation site is built by Asp162 and His177. Met227 serves as a coordination point for NAD(+). Residue Arg237 participates in glycine binding.

Belongs to the THI4 family. In terms of assembly, homooctamer; tetramer of dimers. It depends on Fe(2+) as a cofactor.

It carries out the reaction hydrogen sulfide + glycine + NAD(+) = ADP-5-ethyl-4-methylthiazole-2-carboxylate + nicotinamide + 3 H2O + H(+). The protein operates within cofactor biosynthesis; thiamine diphosphate biosynthesis. Functionally, involved in the biosynthesis of the thiazole moiety of thiamine. Catalyzes the conversion of NAD and glycine to adenosine diphosphate 5-(2-hydroxyethyl)-4-methylthiazole-2-carboxylate (ADT), an adenylated thiazole intermediate, using free sulfide as a source of sulfur. The chain is Thiamine thiazole synthase from Saccharolobus islandicus (strain L.S.2.15 / Lassen #1) (Sulfolobus islandicus).